The primary structure comprises 336 residues: N-acetyl-gamma-glutamyl-phosphate reductase (336 aa).

The active site involves Cys148.

The protein belongs to the NAGSA dehydrogenase family. Type 1 subfamily.

The protein localises to the cytoplasm. The catalysed reaction is N-acetyl-L-glutamate 5-semialdehyde + phosphate + NADP(+) = N-acetyl-L-glutamyl 5-phosphate + NADPH + H(+). It participates in amino-acid biosynthesis; L-arginine biosynthesis; N(2)-acetyl-L-ornithine from L-glutamate: step 3/4. Its function is as follows. Catalyzes the NADPH-dependent reduction of N-acetyl-5-glutamyl phosphate to yield N-acetyl-L-glutamate 5-semialdehyde. This Campylobacter curvus (strain 525.92) protein is N-acetyl-gamma-glutamyl-phosphate reductase.